We begin with the raw amino-acid sequence, 174 residues long: Ribosome maturation factor RimM (174 aa).

The 75-residue stretch at 97-171 folds into the PRC barrel domain; the sequence is EGYYYDFDII…RMVIDPIPGL (75 aa).

This sequence belongs to the RimM family. Binds ribosomal protein uS19.

Its subcellular location is the cytoplasm. Its function is as follows. An accessory protein needed during the final step in the assembly of 30S ribosomal subunit, possibly for assembly of the head region. Essential for efficient processing of 16S rRNA. May be needed both before and after RbfA during the maturation of 16S rRNA. It has affinity for free ribosomal 30S subunits but not for 70S ribosomes. This chain is Ribosome maturation factor RimM, found in Symbiobacterium thermophilum (strain DSM 24528 / JCM 14929 / IAM 14863 / T).